Consider the following 122-residue polypeptide: MVHMHITAWALGLILFFVAYSLYSAGRKGKGVHMGLRLMYIIIIVTGFMLYMSIVKTATGSMHMWYGMKMLAGILVIAGMEMVLVKMSKNKPTGAVWGLFIVALVAVLYLGLKLPLGWYVFK.

Transmembrane regions (helical) follow at residues 6–26, 38–58, 65–85, and 92–112; these read ITAWALGLILFFVAYSLYSAG, LMYIIIIVTGFMLYMSIVKTA, WYGMKMLAGILVIAGMEMVLV, and PTGAVWGLFIVALVAVLYLGL.

It belongs to the UPF0344 family.

It localises to the cell membrane. This chain is UPF0344 protein BcerKBAB4_1054, found in Bacillus mycoides (strain KBAB4) (Bacillus weihenstephanensis).